Here is a 215-residue protein sequence, read N- to C-terminus: NADH-quinone oxidoreductase subunit C (215 aa).

It belongs to the complex I 30 kDa subunit family. In terms of assembly, NDH-1 is composed of 14 different subunits. Subunits NuoB, C, D, E, F, and G constitute the peripheral sector of the complex.

It is found in the cell inner membrane. The catalysed reaction is a quinone + NADH + 5 H(+)(in) = a quinol + NAD(+) + 4 H(+)(out). NDH-1 shuttles electrons from NADH, via FMN and iron-sulfur (Fe-S) centers, to quinones in the respiratory chain. The immediate electron acceptor for the enzyme in this species is believed to be ubiquinone. Couples the redox reaction to proton translocation (for every two electrons transferred, four hydrogen ions are translocated across the cytoplasmic membrane), and thus conserves the redox energy in a proton gradient. The polypeptide is NADH-quinone oxidoreductase subunit C (Bordetella parapertussis (strain 12822 / ATCC BAA-587 / NCTC 13253)).